A 63-amino-acid polypeptide reads, in one-letter code: Progonadoliberin-1 (63 aa).

Gln-1 is subject to Pyrrolidone carboxylic acid. Gly-10 is modified (glycine amide).

This sequence belongs to the GnRH family. In terms of processing, the precursor is cleaved by ACE, which removes the Gly-Lys-Arg peptide at the C-terminus, leading to mature hormone. The mature form of Gonadoliberin-1 is also cleaved and degraded by ACE.

It localises to the secreted. Stimulates the secretion of gonadotropins; it stimulates the secretion of both luteinizing and follicle-stimulating hormones. The chain is Progonadoliberin-1 (GNRH1) from Mesocricetus auratus (Golden hamster).